Here is a 507-residue protein sequence, read N- to C-terminus: Nucleoporin p54 (507 aa).

9 repeat units span residues 5-6 (FG), 25-26 (FG), 28-29 (FG), 53-54 (FG), 61-62 (FG), 63-64 (FG), 67-68 (FG), 87-88 (FG), and 444-445 (FG). The 9 X 2 AA repeats of F-G stretch occupies residues 5–445 (FGAPSGTSGT…SQIRMQNHFG (441 aa)).

It belongs to the NUP54 family. As to quaternary structure, component of the p62 complex, a complex composed of NUP62, NUP54, and the isoform p58 and isoform p45 of NUP58. Interacts with NUTF2. In terms of processing, O-glycosylated.

The protein resides in the nucleus. The protein localises to the nuclear pore complex. It is found in the nucleus membrane. Component of the nuclear pore complex, a complex required for the trafficking across the nuclear membrane. In Homo sapiens (Human), this protein is Nucleoporin p54 (NUP54).